The sequence spans 368 residues: tRNA(Met) cytidine acetate ligase (368 aa).

ATP is bound by residues 7–20 (IAEF…HKYL), G96, N152, and R175.

It belongs to the TmcAL family.

The protein localises to the cytoplasm. It carries out the reaction cytidine(34) in elongator tRNA(Met) + acetate + ATP = N(4)-acetylcytidine(34) in elongator tRNA(Met) + AMP + diphosphate. Functionally, catalyzes the formation of N(4)-acetylcytidine (ac(4)C) at the wobble position of elongator tRNA(Met), using acetate and ATP as substrates. First activates an acetate ion to form acetyladenylate (Ac-AMP) and then transfers the acetyl group to tRNA to form ac(4)C34. The chain is tRNA(Met) cytidine acetate ligase from Streptococcus pyogenes serotype M4 (strain MGAS10750).